An 884-amino-acid chain; its full sequence is Exocyst complex component 2 (884 aa).

A compositionally biased stretch (basic and acidic residues) spans M1 to L11. Residues M1–T27 form a disordered region. One can recognise an IPT/TIG domain in the interval P13 to F98. 2 coiled-coil regions span residues A178–M206 and N846–L874.

This sequence belongs to the SEC5 family. The exocyst complex is composed of sec-3/exoc1, sec-5/exoc2, sec-6/exoc3, sec-8/exoc4, sec-10/exoc5, sec-15/exoc6, exo-70/exoc7 and exo-84/exoc8.

In terms of biological role, component of the exocyst complex involved in the docking of exocytic vesicles with fusion sites on the plasma membrane. This Caenorhabditis elegans protein is Exocyst complex component 2 (sec-5).